A 129-amino-acid chain; its full sequence is Glycine cleavage system H protein (129 aa).

The region spanning 24–106 is the Lipoyl-binding domain; sequence LVRVGLSAYA…HGEGWLLVIR (83 aa). Lysine 65 bears the N6-lipoyllysine mark.

Belongs to the GcvH family. In terms of assembly, the glycine cleavage system is composed of four proteins: P, T, L and H. Requires (R)-lipoate as cofactor.

Its function is as follows. The glycine cleavage system catalyzes the degradation of glycine. The H protein shuttles the methylamine group of glycine from the P protein to the T protein. This Synechococcus sp. (strain CC9311) protein is Glycine cleavage system H protein.